The primary structure comprises 1546 residues: Lysophospholipase NTE1 (1546 aa).

At 1–45 the chain is on the cytoplasmic side; sequence MKDSTEALNSIAFAVDTTLSSILPSSLAPPSAPPATSSFLKSIWY. Residues 46 to 66 traverse the membrane as a helical segment; it reads AFWWLWSMVVFKIMNIILLYI. The Lumenal portion of the chain corresponds to 67–81; sequence PSKIMNALSINFEIT. A helical membrane pass occupies residues 82–102; it reads LNLSSILVALSAIITVCFLVV. The Cytoplasmic portion of the chain corresponds to 103 to 1546; the sequence is RYKYLTGYSK…KKVLYRRNSI (1444 aa). A nucleoside 3',5'-cyclic phosphate is bound by residues 689–820 and 816–965; these read PTEF…LKKL and KLKK…VASK. The PNPLA domain maps to 1239 to 1403; that stretch reads LVLGGGGSRG…LDNLPVSEMK (165 aa). The GXGXXG motif lies at 1243-1248; it reads GGGSRG. A GXSXG motif is present at residues 1270–1274; the sequence is GTSIG. S1272 functions as the Nucleophile in the catalytic mechanism. D1390 acts as the Proton acceptor in catalysis. Residues 1390–1392 carry the DGA/G motif; it reads DGG.

This sequence belongs to the NTE family.

It is found in the endoplasmic reticulum membrane. The catalysed reaction is a 1-acyl-sn-glycero-3-phosphocholine + H2O = sn-glycerol 3-phosphocholine + a fatty acid + H(+). With respect to regulation, inhibited by organophosphorus esters. Intracellular phospholipase B that catalyzes the double deacylation of phosphatidylcholine (PC) to glycerophosphocholine (GroPCho). Plays an important role in membrane lipid homeostasis. Responsible for the rapid PC turnover in response to inositol, elevated temperatures, or when choline is present in the growth medium. The protein is Lysophospholipase NTE1 (NTE1) of Scheffersomyces stipitis (strain ATCC 58785 / CBS 6054 / NBRC 10063 / NRRL Y-11545) (Yeast).